Reading from the N-terminus, the 369-residue chain is RNA-binding protein rnp24 (369 aa).

3 disordered regions span residues 1–77, 200–219, and 304–369; these read MEPI…KKKE, TDFS…TASI, and RMRN…IKFD. The 102-residue stretch at 105 to 206 folds into the RRM 1 domain; the sequence is WGIWVGNLSF…KSNTDFSGRP (102 aa). Residues 209–219 show a composition bias toward polar residues; the sequence is PANTLSKTASI. The RRM 2 domain maps to 228–310; the sequence is SILFVGNLDF…RSKRMRNKSP (83 aa). The segment covering 325 to 341 has biased composition (basic and acidic residues); the sequence is QEDKPNFKRARKIDPRS. Low complexity predominate over residues 346-357; that stretch reads AALAKAQRSSAA.

The protein resides in the nucleus. The sequence is that of RNA-binding protein rnp24 (rnp24) from Schizosaccharomyces pombe (strain 972 / ATCC 24843) (Fission yeast).